Reading from the N-terminus, the 282-residue chain is tRNA (guanine-N(7)-)-methyltransferase (282 aa).

The tract at residues 1–29 (MPHAPAKRQKREEYKNALHEDESNAALPK) is disordered. The segment covering 10–22 (KREEYKNALHEDE) has biased composition (basic and acidic residues). S-adenosyl-L-methionine is bound by residues Gly104, 153 to 154 (NT), and Cys173. Asp176 is an active-site residue. 255-257 (TEE) contributes to the S-adenosyl-L-methionine binding site.

Belongs to the class I-like SAM-binding methyltransferase superfamily. TrmB family. As to quaternary structure, forms a complex with TRM82.

It is found in the nucleus. The enzyme catalyses guanosine(46) in tRNA + S-adenosyl-L-methionine = N(7)-methylguanosine(46) in tRNA + S-adenosyl-L-homocysteine. The protein operates within tRNA modification; N(7)-methylguanine-tRNA biosynthesis. Functionally, catalyzes the formation of N(7)-methylguanine at position 46 (m7G46) in tRNA. This is tRNA (guanine-N(7)-)-methyltransferase from Phaeosphaeria nodorum (strain SN15 / ATCC MYA-4574 / FGSC 10173) (Glume blotch fungus).